The chain runs to 395 residues: Putative 8-amino-7-oxononanoate synthase (395 aa).

R23 serves as a coordination point for substrate. G110–F111 contacts pyridoxal 5'-phosphate. Substrate is bound at residue H135. Residues S182, D207–H210, and T239–K242 contribute to the pyridoxal 5'-phosphate site. The residue at position 242 (K242) is an N6-(pyridoxal phosphate)lysine. T356 serves as a coordination point for substrate.

It belongs to the class-II pyridoxal-phosphate-dependent aminotransferase family. BioF subfamily. As to quaternary structure, homodimer. Pyridoxal 5'-phosphate is required as a cofactor.

It carries out the reaction 6-carboxyhexanoyl-[ACP] + L-alanine + H(+) = (8S)-8-amino-7-oxononanoate + holo-[ACP] + CO2. It functions in the pathway cofactor biosynthesis; biotin biosynthesis. Catalyzes the decarboxylative condensation of pimeloyl-[acyl-carrier protein] and L-alanine to produce 8-amino-7-oxononanoate (AON), [acyl-carrier protein], and carbon dioxide. The protein is Putative 8-amino-7-oxononanoate synthase (bioF) of Bacillus thuringiensis subsp. konkukian (strain 97-27).